Reading from the N-terminus, the 274-residue chain is Large ribosomal subunit protein uL2cz/uL2cy (274 aa).

Disordered regions lie at residues 1 to 21 (MAIH…VDSQ) and 224 to 252 (NPVD…GYPA).

Belongs to the universal ribosomal protein uL2 family. Part of the 50S ribosomal subunit.

It is found in the plastid. The protein localises to the chloroplast. The protein is Large ribosomal subunit protein uL2cz/uL2cy (rpl2-A) of Olimarabidopsis pumila (Dwarf rocket).